The chain runs to 197 residues: 7-methyl-GTP pyrophosphatase (197 aa).

The Proton acceptor role is filled by Asp-72.

This sequence belongs to the Maf family. YceF subfamily. A divalent metal cation is required as a cofactor.

It is found in the cytoplasm. It catalyses the reaction N(7)-methyl-GTP + H2O = N(7)-methyl-GMP + diphosphate + H(+). Functionally, nucleoside triphosphate pyrophosphatase that hydrolyzes 7-methyl-GTP (m(7)GTP). May have a dual role in cell division arrest and in preventing the incorporation of modified nucleotides into cellular nucleic acids. This Bordetella avium (strain 197N) protein is 7-methyl-GTP pyrophosphatase.